A 185-amino-acid chain; its full sequence is Ribosome maturation factor RimM (185 aa).

Positions 103 to 177 (SEEYYWYEIL…SIIVKKIEWY (75 aa)) constitute a PRC barrel domain.

Belongs to the RimM family. As to quaternary structure, binds ribosomal protein uS19.

The protein localises to the cytoplasm. Its function is as follows. An accessory protein needed during the final step in the assembly of 30S ribosomal subunit, possibly for assembly of the head region. Essential for efficient processing of 16S rRNA. May be needed both before and after RbfA during the maturation of 16S rRNA. It has affinity for free ribosomal 30S subunits but not for 70S ribosomes. The sequence is that of Ribosome maturation factor RimM from Petrotoga mobilis (strain DSM 10674 / SJ95).